Consider the following 816-residue polypeptide: Nicotine 6-hydroxylase large subunit (816 aa).

Glu745 is a binding site for Mo-molybdopterin cytosine dinucleotide.

Belongs to the xanthine dehydrogenase family. As to quaternary structure, heterotrimer composed of a large subunit (NdhL), a medium subunit (NdhM) and a small subunit (NdhS). Mo-molybdopterin cytosine dinucleotide serves as cofactor.

The protein localises to the cytoplasm. The enzyme catalyses (R)-nicotine + A + H2O = (R)-6-hydroxynicotine + AH2. It carries out the reaction (S)-nicotine + A + H2O = (S)-6-hydroxynicotine + AH2. It participates in alkaloid degradation; nicotine degradation; 6-hydroxypseudooxynicotine from nicotine (R-isomer route): step 1/2. Its pathway is alkaloid degradation; nicotine degradation; 6-hydroxypseudooxynicotine from nicotine (S-isomer route): step 1/2. With respect to regulation, nicotine dehydrogenase activity is inhibited by tungsten. Component of the nicotine 6-hydroxylase, which is involved in the degradation of nicotine. Catalyzes the hydroxylation of the pyridine ring at C6 to form 6-hydroxynicotine. Can use both L-nicotine and D-nicotine. The chain is Nicotine 6-hydroxylase large subunit from Paenarthrobacter nicotinovorans (Arthrobacter nicotinovorans).